Here is a 192-residue protein sequence, read N- to C-terminus: Cytochrome b-245 light chain (192 aa).

At 2–7 (GQIEWA) the chain is on the cytoplasmic side. The chain crosses the membrane as a helical span at residues 8-30 (MWANEQALASGLILITGGIVATA). At 31–35 (GQFAQ) the chain is on the extracellular side. Residues 36-53 (WYLGAYSIAAGVLICLLE) traverse the membrane as a helical segment. The Cytoplasmic segment spans residues 54–69 (YPRGKRSKGSTMERCG). Residues 70–80 (QKYLTRAVKVF) lie within the membrane without spanning it. The Cytoplasmic portion of the chain corresponds to 81–86 (GPLTSN). A helical transmembrane segment spans residues 87–104 (YYIRAFLHLGLSVPAGFL). Residue Leu105 is a topological domain, extracellular. Residues 106–126 (ATILGTACLAIASSIYLLAAI) form a helical membrane-spanning segment. The Cytoplasmic portion of the chain corresponds to 127–192 (HGEHWTPIET…NPMPVTDEVV (66 aa)). The disordered stretch occupies residues 134–192 (IETKPKERPQVGGTIKQPPSNPPPRPPAEARKKPSEEEVAGVPGGGPQENPMPVTDEVV). A Phosphothreonine modification is found at Thr147. Lys149 is covalently cross-linked (Glycyl lysine isopeptide (Lys-Gly) (interchain with G-Cter in ubiquitin)). Position 168 is a phosphoserine (Ser168).

The protein belongs to the p22phox family. As to quaternary structure, component of the phagocyte NADPH oxidase core complex/cytochrome b558 complex, composed of CYBB (heavy chain (beta)) and CYBA (light chain (alpha)). Component of the phagocyte NADPH oxidase complex composed of an obligatory core heterodimer formed by the membrane proteins CYBA and CYBB and the cytosolic regulatory subunits NCF1/p47-phox, NCF2/p67-phox, NCF4/p40-phox and the small GTPase RAC1 or RAC2. Interacts with NCF1 (via SH3 domain). Interacts with SH3PXD2A. Interacts with DUOX1, DUOX2 and TPO. Interacts with NOX4; this interaction mediates superoxide generation. Interacts with calprotectin (S100A8/9). Interacts with GBP7. Interacts with NOXO1. Forms a heterodimer with NOX3 and is essential for activity and cell membrane localization of NOX3. Interacts with NOX1. Post-translationally, phosphorylation at Thr-147 enhances NADPH oxidase activity by promoting NCF1/p47-phox binding. Ubiquitinated at Lys-149 likely by RNF145.

It localises to the cell membrane. In terms of biological role, subunit of NADPH oxidase complexes that is required for the NADPH oxidase activity that generates, in various cell types, superoxide from molecular oxygen utilizing NADPH as an electron donor. Subunit of the phagocyte NADPH oxidase complex that mediates the transfer of electrons from cytosolic NADPH to O2 to produce the superoxide anion (O2(-)). In the activated complex, electrons are first transferred from NADPH to flavin adenine dinucleotide (FAD) and subsequently transferred via two heme molecules to molecular oxygen, producing superoxide through an outer-sphere reaction. Activation of the NADPH oxidase complex is initiated by the assembly of cytosolic subunits of the NADPH oxidase complex with the core NADPH oxidase complex to form a complex at the plasma membrane or phagosomal membrane. This activation process is initiated by phosphorylation dependent binding of the cytosolic NCF1/p47-phox subunit to the C-terminus of CYBA/p22-phox. Aassociates with NOX3 to form a functional NADPH oxidase constitutively generating superoxide. The polypeptide is Cytochrome b-245 light chain (Tursiops truncatus (Atlantic bottle-nosed dolphin)).